The sequence spans 429 residues: Enolase (429 aa).

Glutamine 162 provides a ligand contact to (2R)-2-phosphoglycerate. Glutamate 204 (proton donor) is an active-site residue. The Mg(2+) site is built by aspartate 241, glutamate 283, and aspartate 310. Residues lysine 335, arginine 364, serine 365, and lysine 386 each coordinate (2R)-2-phosphoglycerate. Catalysis depends on lysine 335, which acts as the Proton acceptor.

It belongs to the enolase family. The cofactor is Mg(2+).

It is found in the cytoplasm. Its subcellular location is the secreted. The protein resides in the cell surface. It catalyses the reaction (2R)-2-phosphoglycerate = phosphoenolpyruvate + H2O. The protein operates within carbohydrate degradation; glycolysis; pyruvate from D-glyceraldehyde 3-phosphate: step 4/5. Its function is as follows. Catalyzes the reversible conversion of 2-phosphoglycerate (2-PG) into phosphoenolpyruvate (PEP). It is essential for the degradation of carbohydrates via glycolysis. The sequence is that of Enolase from Mycobacterium avium (strain 104).